The following is a 335-amino-acid chain: Pharynx and intestine in excess protein 1 (335 aa).

A Glycyl lysine isopeptide (Lys-Gly) (interchain with G-Cter in SUMO) cross-link involves residue Lys68. The C3H1-type 1 zinc-finger motif lies at 98–126 (EYKTRLCDAFRREGYCPYNDNCTYAHGQD). The segment covering 130-156 (VPRRRQEYYSRDPPRERRDSRSRRDDV) has biased composition (basic and acidic residues). The segment at 130-188 (VPRRRQEYYSRDPPRERRDSRSRRDDVDTTINRSSSSASKHHDENRRPSNNHGSSNRRQ) is disordered. 2 stretches are compositionally biased toward polar residues: residues 158–167 (TTINRSSSSA) and 177–187 (PSNNHGSSNRR). A C3H1-type 2 zinc finger spans residues 184–211 (SNRRQICHNFERGNCRYGPRCRFIHVEQ). Residues 288-291 (MAPT) form a required for inhibition of Ser-2 phosphorylation region.

Interacts with hda-1, let-418 and mep-1. Interacts (via C terminus) with cit-1.1 (via C terminus). Post-translationally, sumoylated in adult germ cells.

It is found in the nucleus. The protein resides in the cytoplasm. The protein localises to the cytoskeleton. Its subcellular location is the microtubule organizing center. It localises to the centrosome. It is found in the spindle. The protein resides in the cytoplasmic granule. Its function is as follows. Maternally provided pie-1 is required for germline cell fate determination. Functions as a repressor of RNA polymerase II-dependent gene expression in the developing germline. Required for expression of nos-2 in P4 germline blastomere cells. Inhibits the histone deacetylase activity of hda-1. Represses transcriptional activation of cdk-9 and cit-1.1, which are members of the P-TEFb complex. Acts redundantly with gei-17 to promote piRNA-mediated silencing and fertility in adult germline. Promotes the sumoylation of hda-1 in adult animals but not in embryos thereby regulating its interaction with mep-1. The polypeptide is Pharynx and intestine in excess protein 1 (Caenorhabditis elegans).